Consider the following 249-residue polypeptide: Small ribosomal subunit protein uS3 (249 aa).

The region spanning 23-94 is the KH type-2 domain; it reads LNEFFTRELS…TVELYAEKVQ (72 aa). Phosphoserine is present on residues serine 32, serine 37, serine 106, and serine 141.

The protein belongs to the universal ribosomal protein uS3 family. In terms of assembly, component of the small ribosomal subunit (SSU). Mature yeast ribosomes consist of a small (40S) and a large (60S) subunit. The 40S small subunit contains 1 molecule of ribosomal RNA (18S rRNA) and at least 33 different proteins. The large 60S subunit contains 3 rRNA molecules (25S, 5.8S and 5S rRNA) and at least 46 different proteins.

It is found in the cytoplasm. Functionally, component of the ribosome, a large ribonucleoprotein complex responsible for the synthesis of proteins in the cell. The small ribosomal subunit (SSU) binds messenger RNAs (mRNAs) and translates the encoded message by selecting cognate aminoacyl-transfer RNA (tRNA) molecules. The large subunit (LSU) contains the ribosomal catalytic site termed the peptidyl transferase center (PTC), which catalyzes the formation of peptide bonds, thereby polymerizing the amino acids delivered by tRNAs into a polypeptide chain. The nascent polypeptides leave the ribosome through a tunnel in the LSU and interact with protein factors that function in enzymatic processing, targeting, and the membrane insertion of nascent chains at the exit of the ribosomal tunnel. The sequence is that of Small ribosomal subunit protein uS3 (rps3) from Schizosaccharomyces pombe (strain 972 / ATCC 24843) (Fission yeast).